The following is a 507-amino-acid chain: MFLLEYTYWKIAAHLVNSGYGVIQAGESDEIWLEAPDKSSHDLVRLYKHDLDFRQEMVRDIEEQAERVERVRHQLGRRRMKLLNVFFSTEAPVDDWEEIAKKTFEKGTVSVEPAIVRGTMLRDDLQAVFPSFRTEDCSEEHASFENAQMARERFLSLVLKQEEQRKTEAAVFQNGKPTFTYLFIALQILMFFLLEINGGSTNTETLVAFGAKENSLIAQGEWWRLLTPIVLHIGIAHLAFNTLALWSVGTAVERMYGSGRFLLIYLAAGITGSIASFVFSPYPSAGASGAIFGCLGALLYVALSNRKMFLRTIGTNIIVIIIINLGFGFAVSNIDNSGHIGGLIGGFFAAAALGLPKAGAFGKRLLSAVLLIALAVGFLYYGLHSPSHQESALIQQASELYQEGKYEEVTELLNGEAAQKDASADLLKILAVSDIQIGEYDQAVSLLERAVKKEPKDHASYYNLALLYAEKNELAQAEKAIQTAVKLKPKEQRYKELQRQIENNKES.

Transmembrane regions (helical) follow at residues 179 to 199, 229 to 249, 261 to 281, 283 to 303, and 312 to 332; these read FTYL…INGG, IVLH…WSVG, FLLI…VFSP, PSAG…YVAL, and TIGT…FAVS. S288 serves as the catalytic Nucleophile. Catalysis depends on H339, which acts as the Charge relay system. The next 2 membrane-spanning stretches (helical) occupy residues 340-360 and 365-385; these read IGGL…KAGA and LLSA…GLHS. 2 TPR repeats span residues 424 to 457 and 458 to 491; these read ADLL…EPKD and HASY…KPKE.

Belongs to the peptidase S54 family.

Its subcellular location is the cell membrane. The catalysed reaction is Cleaves type-1 transmembrane domains using a catalytic dyad composed of serine and histidine that are contributed by different transmembrane domains.. With respect to regulation, inhibited by dichloroisocoumarin (DCI) and N-p-tosyl-L-phenylalanine chloromethyl ketone (TPCK), but not by other serine protease inhibitors such as sulfonyl fluoride PMSF and 4-(2-aminoethyl)benzenesulfonyl fluoride (AEBSF). Its function is as follows. Rhomboid-type serine protease that catalyzes intramembrane proteolysis. Important for normal cell division and sporulation. May act as a glucose exporter. The polypeptide is Rhomboid protease GluP (gluP) (Bacillus subtilis (strain 168)).